The following is a 201-amino-acid chain: Adenylyl-sulfate kinase (201 aa).

35-42 (GLSGSGKS) is a binding site for ATP. The active-site Phosphoserine intermediate is the Ser109.

This sequence belongs to the APS kinase family.

The enzyme catalyses adenosine 5'-phosphosulfate + ATP = 3'-phosphoadenylyl sulfate + ADP + H(+). It functions in the pathway sulfur metabolism; hydrogen sulfide biosynthesis; sulfite from sulfate: step 2/3. In terms of biological role, catalyzes the synthesis of activated sulfate. The protein is Adenylyl-sulfate kinase of Bacteroides thetaiotaomicron (strain ATCC 29148 / DSM 2079 / JCM 5827 / CCUG 10774 / NCTC 10582 / VPI-5482 / E50).